Reading from the N-terminus, the 240-residue chain is tRNA pseudouridine synthase A (240 aa).

Residue aspartate 50 is the Nucleophile of the active site. Tyrosine 109 contacts substrate.

It belongs to the tRNA pseudouridine synthase TruA family. Homodimer.

It carries out the reaction uridine(38/39/40) in tRNA = pseudouridine(38/39/40) in tRNA. Formation of pseudouridine at positions 38, 39 and 40 in the anticodon stem and loop of transfer RNAs. In Campylobacter jejuni subsp. jejuni serotype O:6 (strain 81116 / NCTC 11828), this protein is tRNA pseudouridine synthase A.